Consider the following 402-residue polypeptide: Putative polyketide beta-ketoacyl synthase 2 (402 aa).

Disordered regions lie at residues 1–30 (MTPVAVTGMGIAAPNGLGRPTTGRPPWAPR) and 188–222 (VEPRSAPGAGSPSSPAGGMSDSDEPNRAYLPFDRD). The Ketosynthase family 3 (KS3) domain occupies 1-400 (MTPVAVTGMG…GFNSALVVRA (400 aa)). Residues 192 to 205 (SAPGAGSPSSPAGG) show a composition bias toward low complexity.

Belongs to the thiolase-like superfamily. Beta-ketoacyl-ACP synthases family.

It functions in the pathway antifungal biosynthesis; monensin biosynthesis. In Streptomyces virginiae (Streptomyces cinnamonensis), this protein is Putative polyketide beta-ketoacyl synthase 2.